The primary structure comprises 429 residues: Glutamate-1-semialdehyde 2,1-aminomutase (429 aa).

An N6-(pyridoxal phosphate)lysine modification is found at lysine 265.

It belongs to the class-III pyridoxal-phosphate-dependent aminotransferase family. HemL subfamily. In terms of assembly, homodimer. It depends on pyridoxal 5'-phosphate as a cofactor.

The protein localises to the cytoplasm. The enzyme catalyses (S)-4-amino-5-oxopentanoate = 5-aminolevulinate. Its pathway is porphyrin-containing compound metabolism; protoporphyrin-IX biosynthesis; 5-aminolevulinate from L-glutamyl-tRNA(Glu): step 2/2. The chain is Glutamate-1-semialdehyde 2,1-aminomutase from Acidobacterium capsulatum (strain ATCC 51196 / DSM 11244 / BCRC 80197 / JCM 7670 / NBRC 15755 / NCIMB 13165 / 161).